The chain runs to 193 residues: MEPFRIHKGTAAVLMNDNIDTDQIIPKQYLKRIERTGFGKFLFDEWRYDNNRQENPNFPLNAPDRKGASILITGDNFGCGSSREHAPWALADYGFRVIIAGGFADIFYMNCMKNGMLPIVMDKEMREKLVKTDAREQIEVDLENEVITTSTHRFHFTIEKMWKEKLFNGLDEISITMQYEQEIKEYERRVATY.

The protein belongs to the LeuD family. LeuD type 1 subfamily. Heterodimer of LeuC and LeuD.

The catalysed reaction is (2R,3S)-3-isopropylmalate = (2S)-2-isopropylmalate. It participates in amino-acid biosynthesis; L-leucine biosynthesis; L-leucine from 3-methyl-2-oxobutanoate: step 2/4. Catalyzes the isomerization between 2-isopropylmalate and 3-isopropylmalate, via the formation of 2-isopropylmaleate. The chain is 3-isopropylmalate dehydratase small subunit from Bacillus cereus (strain 03BB102).